Here is a 156-residue protein sequence, read N- to C-terminus: Ribosomal RNA large subunit methyltransferase H (156 aa).

S-adenosyl-L-methionine contacts are provided by residues leucine 73, glycine 104, and 123-128 (LSPLTL).

The protein belongs to the RNA methyltransferase RlmH family. As to quaternary structure, homodimer.

Its subcellular location is the cytoplasm. It carries out the reaction pseudouridine(1915) in 23S rRNA + S-adenosyl-L-methionine = N(3)-methylpseudouridine(1915) in 23S rRNA + S-adenosyl-L-homocysteine + H(+). Its function is as follows. Specifically methylates the pseudouridine at position 1915 (m3Psi1915) in 23S rRNA. The polypeptide is Ribosomal RNA large subunit methyltransferase H (Hahella chejuensis (strain KCTC 2396)).